The primary structure comprises 120 residues: uncharacterized protein (120 aa).

This sequence to E.coli YiaW.

This is an uncharacterized protein from Escherichia coli (strain K12).